Reading from the N-terminus, the 353-residue chain is O-antigen biosynthesis glycosyltransferase WclY (353 aa).

Residues 116 to 136 (SLIWGLLWCSIWLFFDKLVIL) form a helical membrane-spanning segment. UDP-binding residues include N190 and E271. An E(x7)E glycosyltransferase motif motif is present at residues 263–271 (EGFGLTVLE).

It belongs to the glycosyltransferase group 1 family. Glycosyltransferase 4 subfamily.

It is found in the membrane. Its pathway is bacterial outer membrane biogenesis; LPS O-antigen biosynthesis. In terms of biological role, involved in the assembly of the O-repeating unit during O-antigen biosynthesis. N-acetylglucosamine transferase accountable for the alpha-D-GlcNAc-1,4-beta-D-Gal linkage within the O-antigen. The chain is O-antigen biosynthesis glycosyltransferase WclY from Escherichia coli.